The sequence spans 155 residues: Small ribosomal subunit protein uS7cz/uS7cy (155 aa).

Belongs to the universal ribosomal protein uS7 family. In terms of assembly, part of the 30S ribosomal subunit.

It is found in the plastid. Its subcellular location is the chloroplast. Functionally, one of the primary rRNA binding proteins, it binds directly to 16S rRNA where it nucleates assembly of the head domain of the 30S subunit. This chain is Small ribosomal subunit protein uS7cz/uS7cy (rps7-A), found in Acorus calamus var. americanus (American sweet flag).